Reading from the N-terminus, the 309-residue chain is tRNA pseudouridine synthase B (309 aa).

D45 (nucleophile) is an active-site residue.

Belongs to the pseudouridine synthase TruB family. Type 1 subfamily.

It carries out the reaction uridine(55) in tRNA = pseudouridine(55) in tRNA. Its function is as follows. Responsible for synthesis of pseudouridine from uracil-55 in the psi GC loop of transfer RNAs. The polypeptide is tRNA pseudouridine synthase B (Oleidesulfovibrio alaskensis (strain ATCC BAA-1058 / DSM 17464 / G20) (Desulfovibrio alaskensis)).